The chain runs to 170 residues: Large ribosomal subunit protein uL18m (170 aa).

This sequence belongs to the universal ribosomal protein uL18 family. Component of the mitochondrial ribosome large subunit (39S) which comprises a 16S rRNA and about 50 distinct proteins.

It is found in the mitochondrion. This is Large ribosomal subunit protein uL18m (mrpl-18) from Caenorhabditis elegans.